The primary structure comprises 377 residues: Nitric oxide reductase FlRd-NAD(+) reductase (377 aa).

This sequence belongs to the FAD-dependent oxidoreductase family. It depends on FAD as a cofactor.

The protein localises to the cytoplasm. The catalysed reaction is 2 reduced [nitric oxide reductase rubredoxin domain] + NAD(+) + H(+) = 2 oxidized [nitric oxide reductase rubredoxin domain] + NADH. Its pathway is nitrogen metabolism; nitric oxide reduction. Functionally, one of at least two accessory proteins for anaerobic nitric oxide (NO) reductase. Reduces the rubredoxin moiety of NO reductase. The protein is Nitric oxide reductase FlRd-NAD(+) reductase of Escherichia coli O139:H28 (strain E24377A / ETEC).